The following is a 430-amino-acid chain: MSSIVAIKGFNDVLPTQTAAWRRLEQHLASLMDAYGYQQIRLPIVEQTGLFKRAIGDATDIVEKEMYTFFDKGNPPESLTLRPEGTAGCVRALVEHNLLRGATPRVWYMGPMFRYEKPQKGRYRQFHQFGVETFGVATPDIDAELIMLTARLWKRMGVDHMVQLELNTLGETDERTEYRNALVAFLNEHKDALDEDSQRRLTTNPLRILDSKIESTQKILENAPKLHDFLKEDSLSHFQQLQDYLTAAGIKFVINQKLVRGLDYYNKTVFEWTTTALGSQGTVCAGGRYDGLVGQLKGKADQSVPAVGFAMGMERLLLLLEQVEQAEIVRDCEAFLVAEPAYQSKALVLAEQLRDQLEAANSNIRIKTGSQGSMKSQMKKADQAGAVYAIILGEREWEAQQLAVKELATAEQSQVALAELVPFLIEKFTK.

Belongs to the class-II aminoacyl-tRNA synthetase family. Homodimer.

It is found in the cytoplasm. It carries out the reaction tRNA(His) + L-histidine + ATP = L-histidyl-tRNA(His) + AMP + diphosphate + H(+). This chain is Histidine--tRNA ligase, found in Acinetobacter baumannii (strain AB307-0294).